The sequence spans 137 residues: ATP synthase epsilon chain (137 aa).

This sequence belongs to the ATPase epsilon chain family. As to quaternary structure, F-type ATPases have 2 components, CF(1) - the catalytic core - and CF(0) - the membrane proton channel. CF(1) has five subunits: alpha(3), beta(3), gamma(1), delta(1), epsilon(1). CF(0) has three main subunits: a, b and c.

The protein localises to the cell membrane. Functionally, produces ATP from ADP in the presence of a proton gradient across the membrane. The chain is ATP synthase epsilon chain from Streptococcus agalactiae serotype III (strain NEM316).